A 147-amino-acid polypeptide reads, in one-letter code: Protein AfaD (147 aa).

An N-terminal signal peptide occupies residues 1–26 (MNGSIRKMMRVTCGMLLMVMSGVSQA). The disordered stretch occupies residues 91-111 (RTGGDGWSPVKGEGGKGVSRP).

This sequence to E.coli AggB.

The chain is Protein AfaD (afaD) from Escherichia coli.